The sequence spans 527 residues: Peptide chain release factor 3 (527 aa).

A tr-type G domain is found at 9 to 277; the sequence is AKRRTFAIIS…AVVDWAPRPL (269 aa). GTP is bound by residues 18–25, 86–90, and 140–143; these read SHPDAGKT, DTPGH, and NKLD.

The protein belongs to the TRAFAC class translation factor GTPase superfamily. Classic translation factor GTPase family. PrfC subfamily.

The protein localises to the cytoplasm. Functionally, increases the formation of ribosomal termination complexes and stimulates activities of RF-1 and RF-2. It binds guanine nucleotides and has strong preference for UGA stop codons. It may interact directly with the ribosome. The stimulation of RF-1 and RF-2 is significantly reduced by GTP and GDP, but not by GMP. In Pseudomonas fluorescens (strain SBW25), this protein is Peptide chain release factor 3.